Consider the following 471-residue polypeptide: A-type ATP synthase subunit B (471 aa).

The protein belongs to the ATPase alpha/beta chains family. Has multiple subunits with at least A(3), B(3), C, D, E, F, H, I and proteolipid K(x).

Its subcellular location is the cell membrane. Functionally, component of the A-type ATP synthase that produces ATP from ADP in the presence of a proton gradient across the membrane. The B chain is a regulatory subunit. The sequence is that of A-type ATP synthase subunit B from Halobacterium salinarum (strain ATCC 29341 / DSM 671 / R1).